Consider the following 225-residue polypeptide: Cytidylate kinase (225 aa).

11-19 is an ATP binding site; the sequence is GPAGAGKGT. The segment covering 169-185 has biased composition (basic and acidic residues); it reads MDRIKSRIEERDARDQS. A disordered region spans residues 169–195; it reads MDRIKSRIEERDARDQSRATAPLAAAP.

It belongs to the cytidylate kinase family. Type 1 subfamily.

It localises to the cytoplasm. The catalysed reaction is CMP + ATP = CDP + ADP. It catalyses the reaction dCMP + ATP = dCDP + ADP. This is Cytidylate kinase from Magnetococcus marinus (strain ATCC BAA-1437 / JCM 17883 / MC-1).